A 248-amino-acid polypeptide reads, in one-letter code: Gamma-glutamyl peptidase 2 (248 aa).

Residues 17–212 enclose the Glutamine amidotransferase type-1 domain; the sequence is SEFVKEMYGG…IDRVHKIKFV (196 aa). The active-site Nucleophile is C101. Active-site residues include H191 and E193.

This sequence belongs to the peptidase C26 family.

It is found in the cytoplasm. Its subcellular location is the cytosol. It carries out the reaction an S-[(1E)-1-(hydroxyimino)-omega-(methylsulfanyl)alkyl]-L-glutathione + H2O = an S-[(1E)-1-(hydroxyimino)-omega-(methylsulfanyl)alkyl]-L-cysteinylglycine + L-glutamate. The catalysed reaction is (E)-1-(glutathione-S-yl)-2-(1H-indol-3-yl)acetohydroximate + H2O = (E)-1-(glycyl-L-cystein-S-yl)-2-(1H-indol-3-yl)acetohydroximate + L-glutamate. It catalyses the reaction 2-(glutathion-S-yl)-2-(1H-indol-3-yl)acetonitrile + H2O = 2-(glycyl-L-cystein-S-yl)-2-(1H-indol-3-yl)acetonitrile + L-glutamate. The enzyme catalyses (Z)-1-(glutathione-S-yl)-2-phenylacetohydroximate + H2O = (Z)-1-(glycyl-L-cystein-S-yl)-2-phenylacetohydroximate + L-glutamate. It functions in the pathway secondary metabolite biosynthesis. In terms of biological role, involved in glucosinolate biosynthesis. Hydrolyzes the gamma-glutamyl peptide bond of several glutathione (GSH) conjugates to produce Cys-Gly conjugates related to glucosinolates. The gamma-Glu-Cys-Gly-GSH conjugates are the sulfur-donating molecule in glucosinolate biosynthesis. This is Gamma-glutamyl peptidase 2 from Arabidopsis thaliana (Mouse-ear cress).